The following is a 677-amino-acid chain: Methionine--tRNA ligase (677 aa).

The 'HIGH' region motif lies at Pro-15–His-25. Zn(2+)-binding residues include Cys-146, Cys-149, Cys-159, and Cys-162. Residues Lys-333 to Ser-337 carry the 'KMSKS' region motif. ATP is bound at residue Lys-336. Residues Asp-575–Lys-677 enclose the tRNA-binding domain.

Belongs to the class-I aminoacyl-tRNA synthetase family. MetG type 1 subfamily. In terms of assembly, homodimer. Zn(2+) is required as a cofactor.

The protein localises to the cytoplasm. It catalyses the reaction tRNA(Met) + L-methionine + ATP = L-methionyl-tRNA(Met) + AMP + diphosphate. In terms of biological role, is required not only for elongation of protein synthesis but also for the initiation of all mRNA translation through initiator tRNA(fMet) aminoacylation. The chain is Methionine--tRNA ligase from Klebsiella pneumoniae (strain 342).